A 149-amino-acid polypeptide reads, in one-letter code: UPF0178 protein Sama_3557 (149 aa).

The protein belongs to the UPF0178 family.

The protein is UPF0178 protein Sama_3557 of Shewanella amazonensis (strain ATCC BAA-1098 / SB2B).